The sequence spans 251 residues: Thiamine thiazole synthase (251 aa).

Residues S34, 53-54, G61, V125, and 151-153 each bind NAD(+); these read EK and HVD. The Fe cation site is built by D153 and H168. Position 216 (M216) interacts with NAD(+). Position 226 (R226) interacts with glycine.

It belongs to the THI4 family. As to quaternary structure, homooctamer; tetramer of dimers. Fe(2+) serves as cofactor.

The enzyme catalyses hydrogen sulfide + glycine + NAD(+) = ADP-5-ethyl-4-methylthiazole-2-carboxylate + nicotinamide + 3 H2O + H(+). It participates in cofactor biosynthesis; thiamine diphosphate biosynthesis. Involved in the biosynthesis of the thiazole moiety of thiamine. Catalyzes the conversion of NAD and glycine to adenosine diphosphate 5-(2-hydroxyethyl)-4-methylthiazole-2-carboxylate (ADT), an adenylated thiazole intermediate, using free sulfide as a source of sulfur. In Thermococcus kodakarensis (strain ATCC BAA-918 / JCM 12380 / KOD1) (Pyrococcus kodakaraensis (strain KOD1)), this protein is Thiamine thiazole synthase.